We begin with the raw amino-acid sequence, 463 residues long: Chromosomal replication initiator protein DnaA (463 aa).

Positions 1-83 are domain I, interacts with DnaA modulators; that stretch reads MSLSLWQQCL…LRFEVGSKPI (83 aa). Residues 83–126 form a domain II region; it reads IVPVAVSSAASSGASVPPAAVRASSLARPSWERVTAQPELSYRS. Positions 127–343 are domain III, AAA+ region; the sequence is NVNPKHTFDN…GALNRVIANA (217 aa). Residues G171, G173, K174, and T175 each coordinate ATP. Positions 344–463 are domain IV, binds dsDNA; it reads NFTGRAITID…FSNLIRTLSS (120 aa).

This sequence belongs to the DnaA family. In terms of assembly, oligomerizes as a right-handed, spiral filament on DNA at oriC.

Its subcellular location is the cytoplasm. In terms of biological role, plays an essential role in the initiation and regulation of chromosomal replication. ATP-DnaA binds to the origin of replication (oriC) to initiate formation of the DNA replication initiation complex once per cell cycle. Binds the DnaA box (a 9 base pair repeat at the origin) and separates the double-stranded (ds)DNA. Forms a right-handed helical filament on oriC DNA; dsDNA binds to the exterior of the filament while single-stranded (ss)DNA is stabiized in the filament's interior. The ATP-DnaA-oriC complex binds and stabilizes one strand of the AT-rich DNA unwinding element (DUE), permitting loading of DNA polymerase. After initiation quickly degrades to an ADP-DnaA complex that is not apt for DNA replication. Binds acidic phospholipids. This chain is Chromosomal replication initiator protein DnaA, found in Edwardsiella ictaluri (strain 93-146).